Consider the following 421-residue polypeptide: Medium-chain specific acyl-CoA dehydrogenase, mitochondrial (421 aa).

Residues 1 to 25 (MAAAFRRGCRVLRSVSHFECRTQHS) constitute a mitochondrion transit peptide. N6-acetyllysine; alternate occurs at positions 30 and 69. 2 positions are modified to N6-succinyllysine; alternate: Lys30 and Lys69. Residue Lys79 is modified to N6-acetyllysine. Residue 158 to 167 (YCVTEPSAGS) coordinates FAD. Residue Ser167 participates in octanoyl-CoA binding. Lys179 carries the post-translational modification N6-succinyllysine. An FAD-binding site is contributed by 191-193 (WIT). An N6-acetyllysine; alternate modification is found at Lys212. An N6-succinyllysine; alternate modification is found at Lys212. Residue Ser216 participates in octanoyl-CoA binding. N6-acetyllysine; alternate occurs at positions 217, 235, 259, and 271. N6-succinyllysine; alternate occurs at positions 217, 235, 259, and 271. Octanoyl-CoA is bound by residues Asp278 and Arg281. Lys301 is subject to N6-acetyllysine. Residues 306–308 (RKT) and 316–317 (HQ) contribute to the FAD site. 2 residues coordinate octanoyl-CoA: Arg349 and Thr351. Thr351 bears the Phosphothreonine mark. FAD is bound at residue 374 to 378 (QIFGG). Residue Glu401 coordinates octanoyl-CoA. Glu401 acts as the Proton acceptor in catalysis. Residue 402–405 (GTAQ) participates in FAD binding.

It belongs to the acyl-CoA dehydrogenase family. As to quaternary structure, homotetramer. Interacts with the heterodimeric electron transfer flavoprotein ETF. It depends on FAD as a cofactor. In terms of processing, acetylated. Could occur at proximity of the cofactor-binding sites and reduce the catalytic activity. Could be deacetylated by SIRT3.

The protein resides in the mitochondrion matrix. The enzyme catalyses a medium-chain 2,3-saturated fatty acyl-CoA + oxidized [electron-transfer flavoprotein] + H(+) = a medium-chain (2E)-enoyl-CoA + reduced [electron-transfer flavoprotein]. It catalyses the reaction pentanoyl-CoA + oxidized [electron-transfer flavoprotein] + H(+) = (2E)-pentenoyl-CoA + reduced [electron-transfer flavoprotein]. The catalysed reaction is hexanoyl-CoA + oxidized [electron-transfer flavoprotein] + H(+) = (2E)-hexenoyl-CoA + reduced [electron-transfer flavoprotein]. It carries out the reaction octanoyl-CoA + oxidized [electron-transfer flavoprotein] + H(+) = (2E)-octenoyl-CoA + reduced [electron-transfer flavoprotein]. The enzyme catalyses decanoyl-CoA + oxidized [electron-transfer flavoprotein] + H(+) = (2E)-decenoyl-CoA + reduced [electron-transfer flavoprotein]. It catalyses the reaction dodecanoyl-CoA + oxidized [electron-transfer flavoprotein] + H(+) = (2E)-dodecenoyl-CoA + reduced [electron-transfer flavoprotein]. The catalysed reaction is tetradecanoyl-CoA + oxidized [electron-transfer flavoprotein] + H(+) = (2E)-tetradecenoyl-CoA + reduced [electron-transfer flavoprotein]. It carries out the reaction oxidized [electron-transfer flavoprotein] + hexadecanoyl-CoA + H(+) = (2E)-hexadecenoyl-CoA + reduced [electron-transfer flavoprotein]. It functions in the pathway lipid metabolism; mitochondrial fatty acid beta-oxidation. Its function is as follows. Medium-chain specific acyl-CoA dehydrogenase is one of the acyl-CoA dehydrogenases that catalyze the first step of mitochondrial fatty acid beta-oxidation, an aerobic process breaking down fatty acids into acetyl-CoA and allowing the production of energy from fats. The first step of fatty acid beta-oxidation consists in the removal of one hydrogen from C-2 and C-3 of the straight-chain fatty acyl-CoA thioester, resulting in the formation of trans-2-enoyl-CoA. Electron transfer flavoprotein (ETF) is the electron acceptor that transfers electrons to the main mitochondrial respiratory chain via ETF-ubiquinone oxidoreductase (ETF dehydrogenase). Among the different mitochondrial acyl-CoA dehydrogenases, medium-chain specific acyl-CoA dehydrogenase acts specifically on acyl-CoAs with saturated 6 to 12 carbons long primary chains. This chain is Medium-chain specific acyl-CoA dehydrogenase, mitochondrial, found in Mus musculus (Mouse).